The following is a 243-amino-acid chain: Adenine phosphoribosyltransferase 1, chloroplastic (243 aa).

The N-terminal 52 residues, 1-52 (MQTIIISPLVSHRLCLARAVPCNRLLNNHHRAPPSIRLSNHRSTTSLRLFSS), are a transit peptide targeting the chloroplast. Glutamine 2 is modified (N-acetylalanine).

It belongs to the purine/pyrimidine phosphoribosyltransferase family. As to quaternary structure, homodimer.

It is found in the plastid. Its subcellular location is the chloroplast. The protein resides in the cytoplasm. It carries out the reaction AMP + diphosphate = 5-phospho-alpha-D-ribose 1-diphosphate + adenine. The protein operates within purine metabolism; AMP biosynthesis via salvage pathway; AMP from adenine: step 1/1. In terms of biological role, catalyzes a salvage reaction resulting in the formation of AMP, that is energically less costly than de novo synthesis. Contributes primarily to the recycling of adenine into adenylate nucleotides, but is also involved in the inactivation of cytokinins by phosphoribosylation. Catalyzes the conversion of cytokinins from free bases (active form) to the corresponding nucleotides (inactive form). In Arabidopsis thaliana (Mouse-ear cress), this protein is Adenine phosphoribosyltransferase 1, chloroplastic (APT1).